A 723-amino-acid chain; its full sequence is MIYQANTLQVKELQDGIAELSFCAPASVNKLDLATLESLDKALDALNAHAGLRGLILTSNKDAFIVGADITEFLGLFAKPEAELDEWLRFANSIFSKLEDLPVPTLSMMRGHALGGGCECVLATDFRIGDKTTSIGLPETKLGIMPGFGGCVRLPRVIGADSAMEIITQGKACRADEALKVGLLDAIVETDQLLESAINTVSLAANEKLDWQLRRKQKTSALSLSKLEAMMSFTMAKGLVAQKAGPHYPAPITSVIAIEEAARSDRDAALDIERKHFVKLAKSEEAKALVGLFLNDQYIKGLAKHAGKSANKATERAAVLGAGIMGGGIAYQSALKGVPVMMKDIAQASLELGMNEASKLLNKRLSRGRLDGFKMAGILSSITPSLHYAGVEQSDVIVEAVVENPKVKAAVLSEVEGLVGEDTVLTSNTSTIPINLLAKSLKRPENFCGMHFFNPVHRMPLVEIIRGEHTSEETINRVVAYAAKMGKSPIVVNDCPGFFVNRVLFPYFGGFSMLLRDGADFTKIDKVMERKFGWPMGPAYLLDVVGLDTAHHAQAVMAQGFPERMGKEGRDAIDALYVAEKYGQKNGSGFYTYSVDKRGRPKKTFSEDILPILADVCQQPQDFDDQTIIQRVMIPMINEVVLCLEEGIIATPQEADMALVYGLGFPPFRGGVFRYLDSVGIGNFVEMAKSYQDLGAMYQVPQLLLDMAAKGESFYDGQQASSL.

The interval 1–189 (MIYQANTLQV…KVGLLDAIVE (189 aa)) is enoyl-CoA hydratase/isomerase. Asp-296 lines the substrate pocket. Residues 311 to 723 (NKATERAAVL…FYDGQQASSL (413 aa)) form a 3-hydroxyacyl-CoA dehydrogenase region. NAD(+) contacts are provided by residues Met-325, Asp-344, 401–403 (VVE), Lys-408, and Ser-430. Catalysis depends on His-451, which acts as the For 3-hydroxyacyl-CoA dehydrogenase activity. Asn-454 contacts NAD(+). Residues Asn-501 and Tyr-661 each contribute to the substrate site.

It in the N-terminal section; belongs to the enoyl-CoA hydratase/isomerase family. This sequence in the C-terminal section; belongs to the 3-hydroxyacyl-CoA dehydrogenase family. In terms of assembly, heterotetramer of two alpha chains (FadB) and two beta chains (FadA).

The enzyme catalyses a (3S)-3-hydroxyacyl-CoA + NAD(+) = a 3-oxoacyl-CoA + NADH + H(+). It catalyses the reaction a (3S)-3-hydroxyacyl-CoA = a (2E)-enoyl-CoA + H2O. The catalysed reaction is a 4-saturated-(3S)-3-hydroxyacyl-CoA = a (3E)-enoyl-CoA + H2O. It carries out the reaction (3S)-3-hydroxybutanoyl-CoA = (3R)-3-hydroxybutanoyl-CoA. The enzyme catalyses a (3Z)-enoyl-CoA = a 4-saturated (2E)-enoyl-CoA. It catalyses the reaction a (3E)-enoyl-CoA = a 4-saturated (2E)-enoyl-CoA. It participates in lipid metabolism; fatty acid beta-oxidation. In terms of biological role, involved in the aerobic and anaerobic degradation of long-chain fatty acids via beta-oxidation cycle. Catalyzes the formation of 3-oxoacyl-CoA from enoyl-CoA via L-3-hydroxyacyl-CoA. It can also use D-3-hydroxyacyl-CoA and cis-3-enoyl-CoA as substrate. This chain is Fatty acid oxidation complex subunit alpha, found in Vibrio atlanticus (strain LGP32) (Vibrio splendidus (strain Mel32)).